The primary structure comprises 243 residues: CD48 antigen (243 aa).

A signal peptide spans 1-26 (MCSRGWDSCLALELLLLPLSLLVTSI). 2 consecutive Ig-like C2-type domains span residues 29–127 (HLVH…KLQV) and 132–212 (PKPV…VCLS). N-linked (GlcNAc...) asparagine glycans are attached at residues N40, N44, N104, N162, and N189. A disulfide bond links C154 and C196. S220 carries the GPI-anchor amidated serine lipid modification. Residues 221–243 (FGVEWIASWLVVTVPTILGLLLT) constitute a propeptide, removed in mature form.

As to quaternary structure, interacts with CD2. Interacts with CD244; this interaction is possible not only on different cells (trans interaction) but also on the same cell (cis interaction). Interacts with LCK. Widely expressed on all hematopoietic cells.

It localises to the cell membrane. Its subcellular location is the membrane raft. It is found in the secreted. In terms of biological role, glycosylphosphatidylinositol (GPI)-anchored cell surface glycoprotein that interacts via its N-terminal immunoglobulin domain with cell surface receptors including CD244/2B4 or CD2 to regulate immune cell function and activation. Participates in T-cell signaling transduction by associating with CD2 and efficiently bringing the Src family protein kinase LCK and LAT to the TCR/CD3 complex. In turn, promotes LCK phosphorylation and subsequent activation. Induces the phosphorylation of the cytoplasmic immunoreceptortyrosine switch motifs (ITSMs) of CD244 initiating a series of signaling events that leads to the generation of the immunological synapse and the directed release of cytolytic granules containing perforin and granzymes by T-lymphocytes and NK-cells. In Homo sapiens (Human), this protein is CD48 antigen (CD48).